A 734-amino-acid polypeptide reads, in one-letter code: Transcription factor EMB1444 (734 aa).

Positions 537 to 566 (QFPTSLEIPKKNKKRAKPGESSRPRPRDRQ) are disordered. The Nuclear localization signal motif lies at 548–555 (NKKRAKPG). The bHLH domain maps to 552–601 (AKPGESSRPRPRDRQLIQDRIKELRELVPNGSKCSIDSLLECTIKHMLFL). Positions 553-566 (KPGESSRPRPRDRQ) are enriched in basic and acidic residues.

It belongs to the bHLH protein family. LHW subfamily. Homodimer.

The protein resides in the nucleus. Transcription factor that may regulate root development. In Arabidopsis thaliana (Mouse-ear cress), this protein is Transcription factor EMB1444.